Here is a 309-residue protein sequence, read N- to C-terminus: Porphobilinogen deaminase (309 aa).

An S-(dipyrrolylmethanemethyl)cysteine modification is found at Cys-242.

The protein belongs to the HMBS family. As to quaternary structure, monomer. Dipyrromethane serves as cofactor.

The catalysed reaction is 4 porphobilinogen + H2O = hydroxymethylbilane + 4 NH4(+). The protein operates within porphyrin-containing compound metabolism; protoporphyrin-IX biosynthesis; coproporphyrinogen-III from 5-aminolevulinate: step 2/4. Its function is as follows. Tetrapolymerization of the monopyrrole PBG into the hydroxymethylbilane pre-uroporphyrinogen in several discrete steps. This is Porphobilinogen deaminase from Pseudoalteromonas atlantica (strain T6c / ATCC BAA-1087).